Consider the following 358-residue polypeptide: ATDIRQVVDSTVEPLMQQQDIAGLSVAVIQNGKAQYFNYGVANKDSKQPITENTLFEIGSVSKTFTATLAGYALANGKLKLSDPASQYLPALRGDKFDHISLLNLGTYTAGGLPLQFPEESDNTGKMISYYQHWKPAFAPGTQRLYSNPSIGLFGHLAAQSLGQPFEKLMEQTVLPKLGLKHTFISVPETQMSLYAQGYDKAGKPVRVSPGALDAEAYGIKTSTSDLIHYVEVNMHPAKLEKPLQQAIAATHTGYYTVDGMTQGLGWEMYPYPIKVDALVEGNSTQMAMEPHKVNWLTPPQAAPLDTLVNKTGSTGGFGAYVAYVPSKGLGVVILANKNYPNAERVKAAHAILSAMDQ.

Ser-60 (acyl-ester intermediate) is an active-site residue. Catalysis depends on Tyr-146, which acts as the Proton acceptor. Substrate is bound at residue 311–313; the sequence is KTG.

This sequence belongs to the class-C beta-lactamase family.

The protein localises to the periplasm. The enzyme catalyses a beta-lactam + H2O = a substituted beta-amino acid. This protein is a serine beta-lactamase with a substrate specificity for cephalosporins. In Pseudomonas fluorescens, this protein is Beta-lactamase.